The sequence spans 397 residues: Lysophospholipid transporter LplT (397 aa).

A run of 11 helical transmembrane segments spans residues 16–36 (MLAV…LLFA), 53–73 (VLQM…GQFA), 91–111 (LGAG…LVGI), 139–159 (LMES…GILA), 164–184 (LAAL…NLWI), 227–247 (LFWG…PVAL), 253–273 (AMPT…AGAA), 281–301 (TVSR…AFAV), 305–325 (LLPA…FIVP), 352–372 (NVAM…GVPP), and 373–393 (VAVG…LWVW).

The protein belongs to the major facilitator superfamily. LplT (TC 2.A.1.42) family.

The protein resides in the cell inner membrane. In terms of biological role, catalyzes the facilitated diffusion of 2-acyl-glycero-3-phosphoethanolamine (2-acyl-GPE) into the cell. The chain is Lysophospholipid transporter LplT from Klebsiella pneumoniae subsp. pneumoniae (strain ATCC 700721 / MGH 78578).